The primary structure comprises 608 residues: Aspartate--tRNA(Asp/Asn) ligase (608 aa).

Glu-175 is a binding site for L-aspartate. The segment at 199–202 (QLFK) is aspartate. Arg-221 provides a ligand contact to L-aspartate. ATP is bound by residues 221-223 (RDE) and Gln-230. His-453 contacts L-aspartate. Glu-487 lines the ATP pocket. Arg-494 contributes to the L-aspartate binding site. 539-542 (GWDR) serves as a coordination point for ATP. Residues 566–608 (IDPLTDAPAAITPQQRKEAGIDAKPKPKAEAQAEAQAEESAEK) form a disordered region. The segment covering 580–596 (QRKEAGIDAKPKPKAEA) has biased composition (basic and acidic residues).

It belongs to the class-II aminoacyl-tRNA synthetase family. Type 1 subfamily. Homodimer.

It is found in the cytoplasm. It catalyses the reaction tRNA(Asx) + L-aspartate + ATP = L-aspartyl-tRNA(Asx) + AMP + diphosphate. Its function is as follows. Aspartyl-tRNA synthetase with relaxed tRNA specificity since it is able to aspartylate not only its cognate tRNA(Asp) but also tRNA(Asn). Reaction proceeds in two steps: L-aspartate is first activated by ATP to form Asp-AMP and then transferred to the acceptor end of tRNA(Asp/Asn). This chain is Aspartate--tRNA(Asp/Asn) ligase, found in Corynebacterium glutamicum (strain R).